An 88-amino-acid polypeptide reads, in one-letter code: Large ribosomal subunit protein bL31B (88 aa).

The protein belongs to the bacterial ribosomal protein bL31 family. Type B subfamily. In terms of assembly, part of the 50S ribosomal subunit.

This Paraburkholderia phytofirmans (strain DSM 17436 / LMG 22146 / PsJN) (Burkholderia phytofirmans) protein is Large ribosomal subunit protein bL31B.